The sequence spans 419 residues: L-rhamnose isomerase (419 aa).

3 residues coordinate Mn(2+): His-262, Asp-294, and Asp-296.

It belongs to the rhamnose isomerase family. As to quaternary structure, homotetramer. Requires Mn(2+) as cofactor.

The protein resides in the cytoplasm. The enzyme catalyses L-rhamnopyranose = L-rhamnulose. It participates in carbohydrate degradation; L-rhamnose degradation; glycerone phosphate from L-rhamnose: step 1/3. In terms of biological role, catalyzes the interconversion of L-rhamnose and L-rhamnulose. In Escherichia coli O157:H7, this protein is L-rhamnose isomerase.